Consider the following 117-residue polypeptide: Snaclec CHH-B subunit beta (117 aa).

Disulfide bonds link cysteine 2–cysteine 13, cysteine 30–cysteine 115, and cysteine 92–cysteine 107. The 108-residue stretch at 9 to 116 folds into the C-type lectin domain; that stretch reads YEGHCYRVFQ…CSKTHNVVCK (108 aa).

It belongs to the snaclec family. Heterodimer of subunits alpha and beta; disulfide-linked. In terms of tissue distribution, expressed by the venom gland.

The protein localises to the secreted. Binds to the subunit GPIbalpha (GP1BA) of the platelet GPIb/V/IX receptor system. It inhibits ristocetin- and vWF-induced platelet aggregation in platelet-rich plasma by inhibiting the binding of vWF to GPIbalpha. The sequence is that of Snaclec CHH-B subunit beta from Crotalus horridus (Timber rattlesnake).